Consider the following 153-residue polypeptide: UPAR/Ly6 domain-containing protein cold (153 aa).

The first 25 residues, 1-25 (MKSWEIAVVLVAAVYLCSQVNFVAG), serve as a signal peptide directing secretion. The Extracellular segment spans residues 26 to 130 (LECYVCSNQT…FVISGAPSRQ (105 aa)). Cystine bridges form between C28-C55, C31-C41, C48-C81, C87-C112, C99-C109, and C113-C118. A glycan (N-linked (GlcNAc...) asparagine) is linked at N33. S124 carries GPI-anchor amidated serine lipidation. Positions 125-153 (GAPSRQGYGVCLTLLTALLGLGSWLIPRS) are cleaved as a propeptide — removed in mature form. The helical transmembrane segment at 131–151 (GYGVCLTLLTALLGLGSWLIP) threads the bilayer. At 152–153 (RS) the chain is on the cytoplasmic side.

Belongs to the snake toxin-like superfamily. In terms of processing, GPI-anchored. In terms of tissue distribution, expressed in all tissues that form septate junctions, including hindgut, trachea, epidermis and dorsal pouch. Expressed in subperineurial glial cells that form the hemolymph-brain barrier of the central nervous system.

It is found in the endosome membrane. It localises to the endoplasmic reticulum membrane. The protein resides in the cell membrane. The protein localises to the cell junction. Its subcellular location is the septate junction. Its function is as follows. Required for septate junction assembly, possibly by organizing the preassembly and transport of septate junction proteins such as dlg1/disks large 1 and Nrx-IV/Neurexin-IV. Involved in paracellular barrier functions of trachea, hindgut and salivary gland mediated by epithelial cell septate junctions. Involved in paracellular barrier functions of the hemolymph-brain barrier (insect blood-brain barrier) mediated by glial cell septate junctions. Required for maintenance of septate junctions in imaginal disk epithelial cells. Involved in the epithelial cell wound-healing response. Directly or indirectly mediates cell-cell adhesion during septate junction formation. This Drosophila melanogaster (Fruit fly) protein is UPAR/Ly6 domain-containing protein cold.